We begin with the raw amino-acid sequence, 308 residues long: Taste receptor type 2 member 41 (308 aa).

Residues 1-6 (MLSTVS) are Extracellular-facing. A helical transmembrane segment spans residues 7–27 (VFFMSIFVLLCFLGILANGFI). Over 28–60 (VLMLSREWLWRGRLLPSDMILLSLGTSRFCQQC) the chain is Cytoplasmic. A helical membrane pass occupies residues 61 to 81 (VGLVNSFYYSLHLVEYSRSLA). Residues 82–90 (RQLISLHMD) are Extracellular-facing. Residues 91 to 111 (FLNSATFWFGTWLSVLFCIKI) traverse the membrane as a helical segment. Over 112-128 (ANFSHPAFLWLKWRFPA) the chain is Cytoplasmic. A helical membrane pass occupies residues 129–149 (LVPWLLLGSILVSFIVTLMFF). The Extracellular portion of the chain corresponds to 150–184 (WGNHTVYQAFLRRKFSGNTTFKEWNRRLEIDYFMP). Residues asparagine 152 and asparagine 167 are each glycosylated (N-linked (GlcNAc...) asparagine). A helical transmembrane segment spans residues 185–205 (LKLVTTSIPCSLFLVSILLLI). The Cytoplasmic portion of the chain corresponds to 206 to 239 (NSLRRHSQRMQHNAHSLQDPNTQAHSRALKSLIS). A helical transmembrane segment spans residues 240–260 (FLVLYALSYVSMVIDATVVIS). Topologically, residues 261-264 (SDNV) are extracellular. The chain crosses the membrane as a helical span at residues 265 to 285 (WYWPWQIILYLCMSVHPFILI). At 286 to 308 (TNNLKFRGTFRQLLLLARGFWVT) the chain is on the cytoplasmic side.

Belongs to the G-protein coupled receptor T2R family. Expressed in subsets of taste receptor cells of the tongue and palate epithelium and exclusively in gustducin-positive cells. Expressed in 15% taste bud cells in circumvallate and foliate papillae but only in 2% in fungiform papillae. Expressed in the duodenum, antrum and fundus (part of the stomach).

It localises to the membrane. Functionally, receptor that may play a role in the perception of bitterness and is gustducin-linked. May play a role in sensing the chemical composition of the gastrointestinal content. The activity of this receptor may stimulate alpha gustducin, mediate PLC-beta-2 activation and lead to the gating of TRPM5. This is Taste receptor type 2 member 41 (Tas2r41) from Rattus norvegicus (Rat).